Reading from the N-terminus, the 461-residue chain is Inositol-trisphosphate 3-kinase A (461 aa).

Residues 1–29 (MTLPGGPTGMARPGGARPCSPGLERAPRR) form a disordered region. The required for cytoskeleton location stretch occupies residues 1–133 (MTLPGGPTGM…SVSSTGSSSL (133 aa)). Residues Arg-35, Arg-55, and Arg-62 each carry the omega-N-methylarginine modification. A disordered region spans residues 49 to 160 (AAAGEPRARG…GNVQLEAGED (112 aa)). Residues 118–134 (RRLSTSSVSSTGSSSLL) show a composition bias toward low complexity. Phosphoserine is present on residues Ser-137 and Ser-197. Residues Ser-197, Lys-209, 249-251 (QDL), and Asp-262 contribute to the ATP site. Substrate is bound by residues Lys-264 and Arg-285. Residues 287–295 (DMYKKMLAV) form a calmodulin-binding region. 312-319 (KPRYMQWR) serves as a coordination point for substrate. The ATP site is built by Lys-336 and Asp-416. Lys-419 serves as a coordination point for substrate.

The protein belongs to the inositol phosphokinase (IPK) family. As to expression, expressed in brain.

It localises to the cytoplasm. The protein localises to the cytoskeleton. The catalysed reaction is 1D-myo-inositol 1,4,5-trisphosphate + ATP = 1D-myo-inositol 1,3,4,5-tetrakisphosphate + ADP + H(+). With respect to regulation, activated by calcium/calmodulin. Functionally, catalyzes the phosphorylation of 1D-myo-inositol 1,4,5-trisphosphate (InsP3) into 1D-myo-inositol 1,3,4,5-tetrakisphosphate and participates to the regulation of calcium homeostasis. The protein is Inositol-trisphosphate 3-kinase A of Homo sapiens (Human).